We begin with the raw amino-acid sequence, 428 residues long: Adenylosuccinate synthetase (428 aa).

GTP contacts are provided by residues 12 to 18 and 40 to 42; these read GDEGKGK and GHT. D13 (proton acceptor) is an active-site residue. 2 residues coordinate Mg(2+): D13 and G40. IMP contacts are provided by residues 13–16, 38–41, T130, R144, Q225, T240, and R304; these read DEGK and NAGH. H41 serves as the catalytic Proton donor. 300–306 contacts substrate; the sequence is TTTGRPR. GTP-binding positions include R306, 332–334, and 414–416; these read KLD and SVG.

The protein belongs to the adenylosuccinate synthetase family. In terms of assembly, homodimer. Mg(2+) is required as a cofactor.

It is found in the cytoplasm. The catalysed reaction is IMP + L-aspartate + GTP = N(6)-(1,2-dicarboxyethyl)-AMP + GDP + phosphate + 2 H(+). Its pathway is purine metabolism; AMP biosynthesis via de novo pathway; AMP from IMP: step 1/2. Functionally, plays an important role in the de novo pathway of purine nucleotide biosynthesis. Catalyzes the first committed step in the biosynthesis of AMP from IMP. The polypeptide is Adenylosuccinate synthetase (Caldanaerobacter subterraneus subsp. tengcongensis (strain DSM 15242 / JCM 11007 / NBRC 100824 / MB4) (Thermoanaerobacter tengcongensis)).